The chain runs to 515 residues: MLTPYKHEPFTDFSVEENRSAFEAALKNVEGELGKDYPLVINGERVTTDDKIVSVNPAMKEQVIGVVSKASREIVDDAFKSAETAFHTWKNVNPEERANILIRAAAIIRRRKHEFSAWLVKEAGKPWKEADADTAEAIDFLEYYARQMITLKDGKPVNSREGEHNRYFYTPIGVCVTISPWNFALAIMAGTTVAPIVTGNTVLLKPASTTPVVAAKFVEVLEEAGLPKGVVNFVPGSGTDIGDYLIDHPKTSLITFTGSRDVGVRLYERAAVVHPGQQHLKRVIVEMGGKDTVVVDKDADLDLAAQSIVTSAFGFSGQKCSAGSRAVIHQDVYDVVLEKAVALTKQLSVGEPTAPDVYMGPVVDQGAFSKIMSYIEVGKEEGRLMVGGEGDDSKGFFIQPTIFADVDPHARIMQEEIFGPVVAFSKARDFDHALEIANNTEYGLTGAVITTNRHHIEKAKRDFHVGNLYFNRNCTGAIVGYHPFGGFKMSGTDSKAGGPDYLALHMQAKTVSEMY.

Catalysis depends on residues Glu286 and Cys320.

Belongs to the aldehyde dehydrogenase family. RocA subfamily.

It catalyses the reaction L-glutamate 5-semialdehyde + NAD(+) + H2O = L-glutamate + NADH + 2 H(+). Its pathway is amino-acid degradation; L-proline degradation into L-glutamate; L-glutamate from L-proline: step 2/2. The polypeptide is 1-pyrroline-5-carboxylate dehydrogenase 2 (rocA2) (Halalkalibacterium halodurans (strain ATCC BAA-125 / DSM 18197 / FERM 7344 / JCM 9153 / C-125) (Bacillus halodurans)).